The primary structure comprises 286 residues: CBY1-interacting BAR domain-containing protein 1 (286 aa).

A mitochondrion-targeting transit peptide spans M1–K47. The BAR-like stretch occupies residues D10–V220. A coiled-coil region spans residues K107–K178. The interval G258–N286 is disordered. Residues V271–N286 are compositionally biased toward acidic residues.

The protein belongs to the CIBAR family. As to quaternary structure, homodimer (via BAR-like domain). Heterodimer with FAM92B (via BAR-like domains). Interacts (via BAR-like domain) with CBY1; this interaction is required for targeting FAM92A to centriole and cilium basal body. Interacts (via BAR-like domain) with CBY3; both proteins form a ninefold symmetric structure at the flagellar base; are recruited to the annulus in a mutually dependent manner and regulate annulus positionning. As to expression, expressed in the heart, liver, spleen, lung, kidney, brain and muscle (at protein level). Strongly expressed throughout the developing limb bud, including the progress zone and the apical ectodermal ridge.

Its subcellular location is the cytoplasm. It is found in the cytoskeleton. It localises to the microtubule organizing center. The protein resides in the centrosome. The protein localises to the centriole. Its subcellular location is the cilium basal body. It is found in the cell projection. It localises to the cilium. The protein resides in the nucleus. The protein localises to the mitochondrion inner membrane. Its subcellular location is the flagellum. Plays a critical role in regulating mitochondrial ultrastructure and function by maintaining the integrity of mitochondrial morphology, particularly the organization of cristae. Preferentially binds to negatively charged phospholipids like cardiolipin and phosphatidylinositol 4,5-bisphosphate enhancing its interaction with mitochondrial membranes. Induces membrane curvature and tubulation, which are critical for maintaining mitochondrial ultrastructure and the organization of cristae. Plays a crucial role in ciliogenesis. May play a role in limb development through its role in ciliogenesis. Plays a key role in the correct positioning of the annulus, a septin-based ring structure in the sperm flagellum, serving both as a physical barrier and a membrane diffusion barrier that separates the midpiece (MP) from the principal piece (PP). This positioning is essential for proper sperm motility and function. Interacts with CBY3 to form a complex which localizes to the curved membrane region of the flagellar pocket. By doing so, may provide stability and rigidity to the periannular membrane to prevent membrane deformation. This function is crucial for halting annulus migration at the proximal end of the fibrous sheath-containing PP. The polypeptide is CBY1-interacting BAR domain-containing protein 1 (Mus musculus (Mouse)).